The chain runs to 341 residues: Ketol-acid reductoisomerase (NADP(+)) (341 aa).

The KARI N-terminal Rossmann domain occupies 1 to 182 (MTELFYDDDA…GGTRAGVIKT (182 aa)). Residues 25–28 (YGSQ), Ser-51, Ser-53, and 83–86 (DQVQ) each bind NADP(+). His-108 is an active-site residue. Gly-134 is an NADP(+) binding site. The region spanning 183 to 328 (TFTEETETDL…RELRKLFSWI (146 aa)) is the KARI C-terminal knotted domain. 4 residues coordinate Mg(2+): Asp-191, Glu-195, Glu-227, and Glu-231. Position 252 (Ser-252) interacts with substrate.

The protein belongs to the ketol-acid reductoisomerase family. Mg(2+) is required as a cofactor.

It catalyses the reaction (2R)-2,3-dihydroxy-3-methylbutanoate + NADP(+) = (2S)-2-acetolactate + NADPH + H(+). It carries out the reaction (2R,3R)-2,3-dihydroxy-3-methylpentanoate + NADP(+) = (S)-2-ethyl-2-hydroxy-3-oxobutanoate + NADPH + H(+). The protein operates within amino-acid biosynthesis; L-isoleucine biosynthesis; L-isoleucine from 2-oxobutanoate: step 2/4. It participates in amino-acid biosynthesis; L-valine biosynthesis; L-valine from pyruvate: step 2/4. Involved in the biosynthesis of branched-chain amino acids (BCAA). Catalyzes an alkyl-migration followed by a ketol-acid reduction of (S)-2-acetolactate (S2AL) to yield (R)-2,3-dihydroxy-isovalerate. In the isomerase reaction, S2AL is rearranged via a Mg-dependent methyl migration to produce 3-hydroxy-3-methyl-2-ketobutyrate (HMKB). In the reductase reaction, this 2-ketoacid undergoes a metal-dependent reduction by NADPH to yield (R)-2,3-dihydroxy-isovalerate. This Renibacterium salmoninarum (strain ATCC 33209 / DSM 20767 / JCM 11484 / NBRC 15589 / NCIMB 2235) protein is Ketol-acid reductoisomerase (NADP(+)).